Here is a 533-residue protein sequence, read N- to C-terminus: Calcium uptake protein 1 homolog, mitochondrial (533 aa).

The transit peptide at 1-13 directs the protein to the mitochondrion; the sequence is MLRHNFRSSIFIR. A disordered region spans residues 127–147; sequence PFRPEASQKEESTDSGTEIEV. EF-hand domains lie at 270-305, 337-358, and 465-500; these read TSHA…IMSQ, KDGK…LQHD, and LSDH…RMRR. Ca(2+)-binding residues include D283, D285, N287, and E294.

It belongs to the MICU1 family. MICU1 subfamily.

The protein resides in the mitochondrion intermembrane space. The protein localises to the mitochondrion inner membrane. In terms of biological role, calcium sensor of the mitochondrial calcium uniporter (mcu-1) channel, which senses calcium level via its EF-hand domains. At low calcium levels, micu-1 occludes the pore of the mcu-1 channel, preventing mitochondrial calcium uptake. At higher calcium levels, calcium-binding to micu-1 induces a conformational change that weakens mcu-1-micu-1 interactions and moves micu-1 away from the pore, allowing calcium permeation through the mcu-1 channel. Also required to protect against manganese toxicity by preventing manganese uptake by mcu-1. Modulates the activity of the mitochondrial calcium uniporter protein mcu-1 depending on the level of intracellular calcium in PLM touch receptor neurons following axonal injury. This is Calcium uptake protein 1 homolog, mitochondrial from Caenorhabditis briggsae.